A 127-amino-acid chain; its full sequence is Holo-[acyl-carrier-protein] synthase (127 aa).

Residues D9 and E58 each coordinate Mg(2+).

This sequence belongs to the P-Pant transferase superfamily. AcpS family. It depends on Mg(2+) as a cofactor.

The protein localises to the cytoplasm. It carries out the reaction apo-[ACP] + CoA = holo-[ACP] + adenosine 3',5'-bisphosphate + H(+). Functionally, transfers the 4'-phosphopantetheine moiety from coenzyme A to a Ser of acyl-carrier-protein. This Shewanella baltica (strain OS195) protein is Holo-[acyl-carrier-protein] synthase.